Consider the following 121-residue polypeptide: Large ribosomal subunit protein uL14 (121 aa).

Belongs to the universal ribosomal protein uL14 family. Part of the 50S ribosomal subunit. Forms a cluster with proteins L3 and L19. In the 70S ribosome, L14 and L19 interact and together make contacts with the 16S rRNA in bridges B5 and B8.

Functionally, binds to 23S rRNA. Forms part of two intersubunit bridges in the 70S ribosome. The polypeptide is Large ribosomal subunit protein uL14 (Prochlorococcus marinus (strain MIT 9301)).